Here is a 347-residue protein sequence, read N- to C-terminus: Protein O-mannose kinase (347 aa).

Over 1 to 14 the chain is Cytoplasmic; sequence MGGTAVGGVIGVRC. A helical; Signal-anchor for type II membrane protein transmembrane segment spans residues 15–35; that stretch reads GVPAVLLCLGALLCANVLLYF. Over 36–347 the chain is Lumenal; the sequence is YLDALYQNTN…SQSQRVRDML (312 aa). Residues 79–347 form the Protein kinase domain; that stretch reads VRRVKLIGQG…SQSQRVRDML (269 aa).

Belongs to the protein kinase superfamily. Ser/Thr protein kinase family. STKL subfamily.

Its subcellular location is the endoplasmic reticulum membrane. The catalysed reaction is 3-O-[beta-D-GalNAc-(1-&gt;3)-beta-D-GlcNAc-(1-&gt;4)-alpha-D-Man]-L-Thr-[protein] + ATP = 3-O-[beta-D-GalNAc-(1-&gt;3)-beta-D-GlcNAc-(1-&gt;4)-(O-6-P-alpha-D-Man)]-Thr-[protein] + ADP + H(+). Its function is as follows. Protein O-mannose kinase that specifically mediates phosphorylation at the 6-position of an O-mannose of the trisaccharide (N-acetylgalactosamine (GalNAc)-beta-1,3-N-acetylglucosamine (GlcNAc)-beta-1,4-mannose) to generate phosphorylated O-mannosyl trisaccharide (N-acetylgalactosamine-beta-1,3-N-acetylglucosamine-beta-1,4-(phosphate-6-)mannose). Phosphorylated O-mannosyl trisaccharide is a carbohydrate structure present in alpha-dystroglycan (dag1), which is required for binding laminin G-like domain-containing extracellular proteins with high affinity. Only shows kinase activity when the GalNAc-beta-3-GlcNAc-beta-terminus is linked to the 4-position of O-mannose, suggesting that this disaccharide serves as the substrate recognition motif. The polypeptide is Protein O-mannose kinase (pomk) (Danio rerio (Zebrafish)).